The sequence spans 726 residues: Methyltransferase FGSG_00040 (726 aa).

TPR repeat units lie at residues 187–220 (SSDI…GQNV), 224–257 (QLAF…AMPS), and 258–291 (EKSL…YPEN). The 196-residue stretch at 336 to 531 (APVEIRESPG…AKTEIFFCYR (196 aa)) folds into the SET domain. Position 530 (Y530) interacts with S-adenosyl-L-methionine.

This sequence belongs to the class V-like SAM-binding methyltransferase superfamily.

The protein operates within mycotoxin biosynthesis. Functionally, methyltransferase; part of the gene cluster that mediates the biosynthesis of gramillins A and B, bicyclic lipopeptides that induce cell death in maize leaves but not in wheat leaves. The nonribosomal peptide synthetase GRA1 incorporates respectively a glutamic adic (Glu), a leucine (Leu), a serine (Ser), a hydroxyglutamine (HOGln), a 2-amino decanoic acid, and 2 cysteins (CysB and CysA). The biosynthesis of 2-amino decanoic acid incorporated in gramillins could be initiated by a fatty acid synthase composed of the alpha and beta subunits FGSG_00036 and FGSG_11656. The cytochrome P450 monooxygenase FGSG_15680 could hydroxylate the fatty acid chain. Subsequent oxidation to the ketone by the oxidoreductase FGSG_00048 and transamination by aminotransferase FGSG_00049 could form 2-amino-decanoic acid. On the other hand, FGSG_15680 could also be responsible for the HO-modified glutamine at the gamma-position. Whether hydroxylation occurs on the fully assembled product or on the Gln residue prior to assembly into the gramillins requires further proof. The thioredoxin FGSG_00043 could also be required for the disulfide-bond formation between CysA and CysB. The specific involvement of the remaining proteins from the cluster is more difficult to discern, but could have broader regulatory (FGSG_00040 and FGSG_11657) or enzymatic functions (FGSG_00044 and FGSG_00045). The final C-domain of GRA1 does not possess the expected sequence of a termination CT domain, often implicated in macrocyclization and release of a cyclopeptidein fungal NRPs; and the thioesterase FGSG_00047 may act in concert with the terminal C-domain of GRA1 to catalyze the formation of the macrocyclic anhydride and release of the products. The sequence is that of Methyltransferase FGSG_00040 from Gibberella zeae (strain ATCC MYA-4620 / CBS 123657 / FGSC 9075 / NRRL 31084 / PH-1) (Wheat head blight fungus).